The chain runs to 313 residues: D-apiose import binding protein (313 aa).

Residues 1-26 form the signal peptide; the sequence is MKLTRRLTLAAFASVLALGTAAPAFS. D-apiofuranose contacts are provided by residues asparagine 39, 115-116, 162-164, arginine 168, asparagine 218, aspartate 243, and glutamine 263; these read DR and DTN.

The protein belongs to the bacterial solute-binding protein 2 family.

The protein resides in the periplasm. Its function is as follows. Part of an ABC transporter complex involved in D-apiose import. This chain is D-apiose import binding protein, found in Rhizobium rhizogenes (strain K84 / ATCC BAA-868) (Agrobacterium radiobacter).